The sequence spans 306 residues: Aspartate carbamoyltransferase catalytic subunit (306 aa).

R55 and T56 together coordinate carbamoyl phosphate. K84 is an L-aspartate binding site. Carbamoyl phosphate contacts are provided by R105, H133, and Q136. R166 and R227 together coordinate L-aspartate. Positions 265 and 266 each coordinate carbamoyl phosphate.

This sequence belongs to the aspartate/ornithine carbamoyltransferase superfamily. ATCase family. As to quaternary structure, heterododecamer (2C3:3R2) of six catalytic PyrB chains organized as two trimers (C3), and six regulatory PyrI chains organized as three dimers (R2).

It carries out the reaction carbamoyl phosphate + L-aspartate = N-carbamoyl-L-aspartate + phosphate + H(+). The protein operates within pyrimidine metabolism; UMP biosynthesis via de novo pathway; (S)-dihydroorotate from bicarbonate: step 2/3. Its function is as follows. Catalyzes the condensation of carbamoyl phosphate and aspartate to form carbamoyl aspartate and inorganic phosphate, the committed step in the de novo pyrimidine nucleotide biosynthesis pathway. The chain is Aspartate carbamoyltransferase catalytic subunit from Neisseria gonorrhoeae (strain NCCP11945).